Here is an 888-residue protein sequence, read N- to C-terminus: Semaphorin-6B (888 aa).

Positions 1 to 25 are cleaved as a signal peptide; the sequence is MQTPRASPPRPALLLLLLLLGGAHG. Topologically, residues 26–603 are extracellular; it reads LFPEEPPPLS…VSVNLLVTSS (578 aa). In terms of domain architecture, Sema spans 31–523; it reads PPPLSVAPRD…FPRCVVRVPV (493 aa). Residue asparagine 74 is glycosylated (N-linked (GlcNAc...) asparagine). Cystine bridges form between cysteine 116-cysteine 126 and cysteine 144-cysteine 153. Asparagine 155, asparagine 167, and asparagine 291 each carry an N-linked (GlcNAc...) asparagine glycan. 2 disulfide bridges follow: cysteine 267/cysteine 378 and cysteine 292/cysteine 337. N-linked (GlcNAc...) asparagine glycans are attached at residues asparagine 386, asparagine 441, and asparagine 462. 4 cysteine pairs are disulfide-bonded: cysteine 486–cysteine 517, cysteine 526–cysteine 544, cysteine 532–cysteine 578, and cysteine 536–cysteine 552. The helical transmembrane segment at 604–624 threads the bilayer; that stretch reads VAAFVVGAVVSGFSVGWFVGL. Residues 625–888 are Cytoplasmic-facing; the sequence is RERRELARRK…GADRTAPPVP (264 aa). Disordered regions lie at residues 651-679, 695-742, and 757-888; these read VSRLGERRAQGPGGRGGGGGGGAGVPPEA, LQGG…HPLL, and RAPE…PPVP. Gly residues predominate over residues 661-674; sequence GPGGRGGGGGGGAG. Arginine 665 is modified (omega-N-methylarginine). Residues 706–717 are compositionally biased toward low complexity; that stretch reads LLPTPEQTPLPQ.

This sequence belongs to the semaphorin family. (Microbial infection) Interacts with P.sordellii toxin TcsL; semaphorins SEMA6A and SEMA6B constitute the major host receptors for TcsL in the vascular endothelium. In terms of tissue distribution, expressed in the brain in GABAergic neurons.

Its subcellular location is the cell membrane. Its function is as follows. Functions as a cell surface repellent for mossy fibers of developing neurons in the hippocampus where it plays a role in axon guidance. May function through the PLXNA4 receptor expressed by mossy cell axons. (Microbial infection) Acts as a receptor for P.sordellii toxin TcsL in the in the vascular endothelium. The sequence is that of Semaphorin-6B (SEMA6B) from Homo sapiens (Human).